The sequence spans 195 residues: MVFPSPLQGVDIRHNKDRKVRRKEPKSQDIYLRLLVKLYRFLARRTNSTFNQVVLKRLFMSRTNRPPLSLSRMIRKMKLPGREGKTAVVVGTITDDVRVQEVPKLKVCALRVSSRARSRILKAGGKILTFDQLALDSPKGCGTVLLSGPRKGREVYRHFGKAPGTPHSHTKPYVRSKGRKFERARGRRASRGYKN.

Lysine 126 participates in a covalent cross-link: Glycyl lysine isopeptide (Lys-Gly) (interchain with G-Cter in SUMO2). Serine 137 is modified (phosphoserine). Positions 158-195 (HFGKAPGTPHSHTKPYVRSKGRKFERARGRRASRGYKN) are disordered. A Phosphothreonine modification is found at threonine 165. Basic residues-rich tracts occupy residues 168–178 (SHTKPYVRSKG) and 185–195 (RGRRASRGYKN). Lysine 171 is covalently cross-linked (Glycyl lysine isopeptide (Lys-Gly) (interchain with G-Cter in SUMO2)).

It belongs to the eukaryotic ribosomal protein eL18 family. In terms of assembly, component of the large ribosomal subunit.

It localises to the cytoplasm. It is found in the cytosol. Its subcellular location is the rough endoplasmic reticulum. Functionally, component of the large ribosomal subunit. The polypeptide is Large ribosomal subunit protein eL18 (RPL18) (Sus scrofa (Pig)).